A 52-amino-acid chain; its full sequence is Defensin D2 (52 aa).

4 cysteine pairs are disulfide-bonded: cysteine 8–cysteine 52, cysteine 19–cysteine 39, cysteine 25–cysteine 46, and cysteine 29–cysteine 48.

In terms of tissue distribution, distributed in the epidermal cell layer of leaves and in the subepidermal layer region of stems. Not in roots.

Its subcellular location is the secreted. The protein resides in the cell wall. In terms of biological role, antimicrobial peptide. Active against Fusarium spp., Gram-positive and Gram-negative bacterial pathogens. The sequence is that of Defensin D2 from Spinacia oleracea (Spinach).